A 207-amino-acid polypeptide reads, in one-letter code: Large ribosomal subunit protein uL4 (207 aa).

The disordered stretch occupies residues 49–78 (HAVKNRSAVRGGGRKPWRQKGTGRARQGSI). Positions 60–71 (GGRKPWRQKGTG) are enriched in basic residues.

It belongs to the universal ribosomal protein uL4 family. In terms of assembly, part of the 50S ribosomal subunit.

Functionally, one of the primary rRNA binding proteins, this protein initially binds near the 5'-end of the 23S rRNA. It is important during the early stages of 50S assembly. It makes multiple contacts with different domains of the 23S rRNA in the assembled 50S subunit and ribosome. In terms of biological role, forms part of the polypeptide exit tunnel. The chain is Large ribosomal subunit protein uL4 from Latilactobacillus sakei subsp. sakei (strain 23K) (Lactobacillus sakei subsp. sakei).